The primary structure comprises 65 residues: MTKAAELRQKDVAGLEAEIKSLQKAHFGLRMQKATQQLGNTGTLRTTRRDIARAKTILAEKQAAK.

Belongs to the universal ribosomal protein uL29 family.

In Paracidovorax citrulli (strain AAC00-1) (Acidovorax citrulli), this protein is Large ribosomal subunit protein uL29.